The sequence spans 507 residues: MTDDPGSGFTTVWNAVVSELNGDPKVDDGPSSDANLSAPLTPQQRAWLNLVQPLTIVEGFALLSVPSSFVQNEIERHLRAPITDALSRRLGHQIQLGVRIAPPATDEADDTTVPPSENPATTSPDTTTDNDEIDDSAAARGDNQHSWPSYFTERPHNTDSATAGVTSLNRRYTFDTFVIGASNRFAHAAALAIAEAPARAYNPLFIWGESGLGKTHLLHAAGNYAQRLFPGMRVKYVSTEEFTNDFINSLRDDRKVAFKRSYRDVDVLLVDDIQFIEGKEGIQEEFFHTFNTLHNANKQIVISSDRPPKQLATLEDRLRTRFEWGLITDVQPPELETRIAILRKKAQMERLAVPDDVLELIASSIERNIRELEGALIRVTAFASLNKTPIDKALAEIVLRDLIADANTMQISAATIMAATAEYFDTTVEELRGPGKTRALAQSRQIAMYLCRELTDLSLPKIGQAFGRDHTTVMYAQRKILSEMAERREVFDHVKELTTRIRQRSKR.

Positions 1–112 (MTDDPGSGFT…PATDEADDTT (112 aa)) are domain I, interacts with DnaA modulators. The segment at 99 to 155 (RIAPPATDEADDTTVPPSENPATTSPDTTTDNDEIDDSAAARGDNQHSWPSYFTERP) is disordered. Over residues 113-127 (VPPSENPATTSPDTT) the composition is skewed to polar residues. The interval 113–166 (VPPSENPATTSPDTTTDNDEIDDSAAARGDNQHSWPSYFTERPHNTDSATAGVT) is domain II. A domain III, AAA+ region region spans residues 167-383 (SLNRRYTFDT…GALIRVTAFA (217 aa)). ATP is bound by residues Gly-211, Gly-213, Lys-214, and Thr-215. The domain IV, binds dsDNA stretch occupies residues 384–507 (SLNKTPIDKA…TTRIRQRSKR (124 aa)).

The protein belongs to the DnaA family. As to quaternary structure, oligomerizes as a right-handed, spiral filament on DNA at oriC.

It is found in the cytoplasm. Functionally, plays an essential role in the initiation and regulation of chromosomal replication. ATP-DnaA binds to the origin of replication (oriC) to initiate formation of the DNA replication initiation complex once per cell cycle. Binds the DnaA box (a 9 base pair repeat at the origin) and separates the double-stranded (ds)DNA. Forms a right-handed helical filament on oriC DNA; dsDNA binds to the exterior of the filament while single-stranded (ss)DNA is stabiized in the filament's interior. The ATP-DnaA-oriC complex binds and stabilizes one strand of the AT-rich DNA unwinding element (DUE), permitting loading of DNA polymerase. After initiation quickly degrades to an ADP-DnaA complex that is not apt for DNA replication. Binds acidic phospholipids. The polypeptide is Chromosomal replication initiator protein DnaA (Mycobacterium tuberculosis (strain ATCC 25177 / H37Ra)).